Here is a 203-residue protein sequence, read N- to C-terminus: Endo-type membrane-bound lytic murein transglycosylase A (203 aa).

Residues 1–15 (MKLRWLLILVVFLAG) form the signal peptide. Cysteine 16 carries N-palmitoyl cysteine lipidation. Cysteine 16 carries S-diacylglycerol cysteine lipidation.

The protein belongs to the transglycosylase Slt family.

It localises to the cell outer membrane. The catalysed reaction is Endolytic cleavage of the (1-&gt;4)-beta-glycosidic linkage between N-acetylmuramic acid (MurNAc) and N-acetylglucosamine (GlcNAc) residues in peptidoglycan with concomitant formation of a 1,6-anhydrobond in the MurNAc residue.. Functionally, murein-degrading enzyme. May play a role in recycling of muropeptides during cell elongation and/or cell division. Preferentially cleaves at a distance of more than two disaccharide units from the ends of the glycan chain. The sequence is that of Endo-type membrane-bound lytic murein transglycosylase A from Klebsiella pneumoniae subsp. pneumoniae (strain ATCC 700721 / MGH 78578).